Here is a 270-residue protein sequence, read N- to C-terminus: Ribonuclease HII (270 aa).

One can recognise an RNase H type-2 domain in the interval 84–270 (RYIAGVDEVG…HRNSFLTKLL (187 aa)). Residues Asp-90, Glu-91, and Asp-186 each contribute to the a divalent metal cation site.

Belongs to the RNase HII family. It depends on Mn(2+) as a cofactor. Mg(2+) serves as cofactor.

Its subcellular location is the cytoplasm. It carries out the reaction Endonucleolytic cleavage to 5'-phosphomonoester.. In terms of biological role, endonuclease that specifically degrades the RNA of RNA-DNA hybrids. The chain is Ribonuclease HII from Clostridium beijerinckii (strain ATCC 51743 / NCIMB 8052) (Clostridium acetobutylicum).